The sequence spans 186 residues: Periplasmic nitrate reductase, electron transfer subunit (186 aa).

An N-terminal signal peptide occupies residues M1–A20. 8 residues coordinate heme c: H87, C102, C105, H106, H123, C144, C147, and H148.

Belongs to the NapB family. As to quaternary structure, component of the periplasmic nitrate reductase NapAB complex composed of NapA and NapB. Binds 2 heme C groups per subunit.

The protein localises to the periplasm. Its function is as follows. Electron transfer subunit of the periplasmic nitrate reductase complex NapAB. Transfers electrons to NapA subunit, thus allowing electron flow between membrane and periplasm. Essential for periplasmic nitrate reduction with nitrate as the terminal electron acceptor. The sequence is that of Periplasmic nitrate reductase, electron transfer subunit from Wolinella succinogenes (strain ATCC 29543 / DSM 1740 / CCUG 13145 / JCM 31913 / LMG 7466 / NCTC 11488 / FDC 602W) (Vibrio succinogenes).